The following is a 280-amino-acid chain: MHLTKTWLAQLPLTDIQQVQPVSGGDINAAFQIITRHHQYFLKVQPHNDVTFFDHEVAGLRLLGAVTKTPRVIASGTIATDGYLLLDWLATGTGSQSALGAAVAKVHHQHHAQFGLDHDFTAGKLPKINHWQTDWATFYTQQRLDVLVNLAKEHHLWSETREMHYHRLRQQLLQDSHMHTVKPSLLHGDLWSGNYLFDTTGTPVLIDPDVFYGDREMDLAMTTIFGGFDTDFYQAYQAAYPVAPGMQDRLPSYQLYYLLAHLNLFGETYGPAVDRILMQY.

87-89 (DWL) is an ATP binding site. The active-site Proton acceptor is D189.

The protein belongs to the fructosamine kinase family.

The catalysed reaction is N(6)-(D-ribulosyl)-L-lysine + ATP = N(6)-(3-O-phospho-D-ribulosyl)-L-lysine + ADP + H(+). The enzyme catalyses N-(D-ribulosyl)-cadaverine + ATP = N-(3-O-phospho-D-ribulosyl)-cadaverine + ADP + H(+). It catalyses the reaction N(6)-(D-erythrulosyl)-L-lysine + ATP = N(6)-(3-O-phospho-D-erythrulosyl)-L-lysine + ADP + H(+). It carries out the reaction N-(D-erythrulosyl)-cadaverine + ATP = N-(3-O-phospho-D-erythrulosyl)-cadaverine + ADP + H(+). The catalysed reaction is N(6)-D-ribulosyl-L-lysyl-[protein] + ATP = N(6)-(3-O-phospho-D-ribulosyl)-L-lysyl-[protein] + ADP + H(+). The enzyme catalyses N(6)-(D-erythrulosyl)-L-lysyl-[protein] + ATP = N(6)-(3-O-phospho-D-erythrulosyl)-L-lysyl-[protein] + ADP + H(+). Ketoamine kinase that phosphorylates ketoamines, such as erythruloselysine, erythrulosecadaverine, ribuloselysine and ribulosecadaverine, on the third carbon of the sugar moiety to generate ketoamine 3-phosphate. Has higher activity on free lysine (erythruloselysine and ribuloselysine), than on ribuloselysine and erythruloselysine residues on glycated proteins. The sequence is that of Probable ketoamine kinase lp_1983 from Lactiplantibacillus plantarum (strain ATCC BAA-793 / NCIMB 8826 / WCFS1) (Lactobacillus plantarum).